The chain runs to 239 residues: Ribonuclease PH (239 aa).

Residues Arg-86 and 124–126 contribute to the phosphate site; that span reads GTR.

The protein belongs to the RNase PH family. Homohexameric ring arranged as a trimer of dimers.

The catalysed reaction is tRNA(n+1) + phosphate = tRNA(n) + a ribonucleoside 5'-diphosphate. Functionally, phosphorolytic 3'-5' exoribonuclease that plays an important role in tRNA 3'-end maturation. Removes nucleotide residues following the 3'-CCA terminus of tRNAs; can also add nucleotides to the ends of RNA molecules by using nucleoside diphosphates as substrates, but this may not be physiologically important. Probably plays a role in initiation of 16S rRNA degradation (leading to ribosome degradation) during starvation. The chain is Ribonuclease PH from Rhizobium johnstonii (strain DSM 114642 / LMG 32736 / 3841) (Rhizobium leguminosarum bv. viciae).